We begin with the raw amino-acid sequence, 148 residues long: UPF0260 protein YcgN (148 aa).

The protein belongs to the UPF0260 family.

In Salmonella paratyphi A (strain AKU_12601), this protein is UPF0260 protein YcgN.